The sequence spans 41 residues: Conotoxin Bu22 (41 aa).

The propeptide occupies Ser-1–Arg-25. Cystine bridges form between Cys-27–Cys-33 and Cys-28–Cys-40.

The protein belongs to the conotoxin A superfamily. Expressed by the venom duct.

The protein resides in the secreted. The polypeptide is Conotoxin Bu22 (Conus bullatus (Bubble cone)).